A 738-amino-acid polypeptide reads, in one-letter code: Pentatricopeptide repeat-containing protein At5g65570 (738 aa).

PPR repeat units follow at residues 98-128 (AEIS…MSER), 129-163 (HIVT…NVLP), 164-198 (DEYT…GLEV), 200-230 (NVFV…VEEK), 231-265 (DVVL…KVQP), 266-300 (NEYT…GFES), 301-331 (ALAS…IEYP), 332-366 (NQVS…SIKP), 367-401 (NSFT…GFDR), 402-432 (DKYA…LSEV), 433-467 (DVIS…GLQP), 468-502 (NDVT…KIML), and 503-537 (TNDH…DLVL). Residues 537-612 (LWRTLLSACK…NPAMSWVEIN (76 aa)) form a type E motif region. The interval 613–644 (KETHTFMAGDLFSHPNSEQILENLEELIKKSK) is type E(+) motif. Residues 645-738 (DLGYVEDKSC…DGSCSCGDYW (94 aa)) are type DYW motif.

It belongs to the PPR family. PCMP-H subfamily.

The chain is Pentatricopeptide repeat-containing protein At5g65570 (PCMP-H47) from Arabidopsis thaliana (Mouse-ear cress).